We begin with the raw amino-acid sequence, 350 residues long: Protein XRP2 (350 aa).

Basic residues predominate over residues 1–10 (MGCFFSKRRK). A disordered region spans residues 1 to 31 (MGCFFSKRRKADKESRPENEEERPKQYSWDQ). Gly-2 carries the N-myristoyl glycine lipid modification. Cys-3 is lipidated: S-palmitoyl cysteine. Basic and acidic residues predominate over residues 11–31 (ADKESRPENEEERPKQYSWDQ). The C-CAP/cofactor C-like domain occupies 24-179 (PKQYSWDQRE…TWSNIHDFTP (156 aa)). Residues 98–99 (GS) and 115–118 (QQFR) contribute to the GTP site.

It belongs to the TBCC family. As to quaternary structure, found in a complex with ARL3, RP2 and UNC119 (or UNC119B); RP2 induces hydrolysis of GTP ARL3 in the complex, leading to the release of UNC119 (or UNC119B). Interacts with ARL3; interaction is direct and stimulated with the activated GTP-bound form of ARL3. Myristoylated on Gly-2; which may be required for membrane targeting. Post-translationally, palmitoylated on Cys-3; which may be required for plasma membrane targeting. Mutation of Cys-3 targets the protein to internal membranes. Ubiquitous. Expressed in the rod and cone photoreceptors, extending from the tips of the outer segment (OS) through the inner segment (IS) and outer nuclear layer (ONL) and into the synaptic terminals of the outer plexiform layer (ONL). Also detected in the bipolar, horizontal and amacrine cells in the inner nuclear layer (INL), extending to the inner plexiform layer (IPL) and though the ganglion cell layer (GCL) and into the nerve fiber layer (NFL) (at protein level).

The protein localises to the cell membrane. The protein resides in the cell projection. Its subcellular location is the cilium. Functionally, acts as a GTPase-activating protein (GAP) involved in trafficking between the Golgi and the ciliary membrane. Involved in localization of proteins, such as NPHP3, to the cilium membrane by inducing hydrolysis of GTP ARL3, leading to the release of UNC119 (or UNC119B). Acts as a GTPase-activating protein (GAP) for tubulin in concert with tubulin-specific chaperone C, but does not enhance tubulin heterodimerization. Acts as a guanine nucleotide dissociation inhibitor towards ADP-ribosylation factor-like proteins. This chain is Protein XRP2 (RP2), found in Homo sapiens (Human).